We begin with the raw amino-acid sequence, 151 residues long: 3-hydroxyacyl-[acyl-carrier-protein] dehydratase FabZ (151 aa).

His-57 is an active-site residue.

Belongs to the thioester dehydratase family. FabZ subfamily.

Its subcellular location is the cytoplasm. The catalysed reaction is a (3R)-hydroxyacyl-[ACP] = a (2E)-enoyl-[ACP] + H2O. Involved in unsaturated fatty acids biosynthesis. Catalyzes the dehydration of short chain beta-hydroxyacyl-ACPs and long chain saturated and unsaturated beta-hydroxyacyl-ACPs. The polypeptide is 3-hydroxyacyl-[acyl-carrier-protein] dehydratase FabZ (Tolumonas auensis (strain DSM 9187 / NBRC 110442 / TA 4)).